The sequence spans 763 residues: MSELLSFALFLASVLIYAWKAGRNTWWFAATLTVLGLFVVLNITLFASDYFTGDGINDAVLYTLTNSLTGAGVSKYILPGIGIVLGLTAVFGALGWILRHRRHHPHHFGYSLLALLLALGSVDASPAFRQITELVKSQSRDGDPDFAAYYKEPSKTIPDPKLNLVYIYGESLERTYFDNEAFPDLTPELGALKNEGLDFSHTQQLPGTDYTIAGMVASQCGIPLFAPFEGNASASVSSFFPQNICLGDILKNSGYQNYFVQGANLRFAGKDVFLKSHGFDHLYGSEELKSVVADPHYRNDWGFYDDTVLDEAWKKFEELSRSGQRFSLFTLTVDTHHPDGFISRTCNRKKYDFDGKPNQSFSAVSCSQENIAAFINKIKASPWFKDTVIVVSSDHLAMNNTAWKYLNKQDRNNLFFVIRGDKPQQETLAVKRNTMDNGATVLDILGGDNYLGLGRSSLSGQSMSEIFLNIKEKTLAWKPDIIRLWKFPKEMKEFTIDQQKNMIAFSGSHFRLPLLLRVSDKRVEPLPESEYSAPLRFQLADFAPRDNFVWVDRCYKMAQLWAPELALSTDWCVSQGQLGGQQIVQHVDKTTWQGKTAFKDTVIDMARYKGNVDTLKIVDNDIRYKADSFIFNVAGAPEEVKQFSGISRPESWGRWSNAQLGDEVKIEYKHPLPKKFDLVITAKAYGNNASRPIPVRVGNEEQTLVLGNEVTTTTLHFDNPTDADTLVIVPPEPVSTNEGNILGHSPRKLGIGMVEIKVVEREG.

The next 4 membrane-spanning stretches (helical) occupy residues 1–21, 26–46, 77–97, and 108–128; these read MSELLSFALFLASVLIYAWKA, WWFAATLTVLGLFVVLNITLF, ILPGIGIVLGLTAVFGALGWI, and FGYSLLALLLALGSVDASPAF.

Belongs to the OpgB family.

It is found in the cell inner membrane. The enzyme catalyses a phosphatidylglycerol + a membrane-derived-oligosaccharide D-glucose = a 1,2-diacyl-sn-glycerol + a membrane-derived-oligosaccharide 6-(glycerophospho)-D-glucose.. The protein operates within glycan metabolism; osmoregulated periplasmic glucan (OPG) biosynthesis. In terms of biological role, transfers a phosphoglycerol residue from phosphatidylglycerol to the membrane-bound nascent glucan backbones. The chain is Phosphoglycerol transferase I from Shigella boydii serotype 18 (strain CDC 3083-94 / BS512).